A 572-amino-acid polypeptide reads, in one-letter code: [Pyruvate dehydrogenase [acetyl-transferring]]-phosphatase 1, mitochondrial (572 aa).

Positions 95–122 (NTSGNINMPSPNPKGTETQKSQRSQNDQ) are disordered. Positions 153–543 (RYDVAQLPSN…DDLTVTVAFF (391 aa)) constitute a PPM-type phosphatase domain. Residues aspartate 197, glycine 198, aspartate 424, and aspartate 480 each contribute to the Mn(2+) site. Residues 470-480 (EAQRPAFRYKD) show a composition bias toward basic and acidic residues. The interval 470 to 492 (EAQRPAFRYKDNNSSSPSGSNPE) is disordered. Residues 481-491 (NNSSSPSGSNP) are compositionally biased toward low complexity.

Belongs to the PP2C family. Mg(2+) serves as cofactor. Requires Mn(2+) as cofactor. Post-translationally, processed by mitochondrial inner membrane protease (IMP) complex and released to the intermembrane space.

The protein localises to the mitochondrion intermembrane space. It carries out the reaction O-phospho-L-seryl-[pyruvate dehydrogenase E1 alpha subunit] + H2O = L-seryl-[pyruvate dehydrogenase E1 alpha subunit] + phosphate. Catalyzes the dephosphorylation and concomitant reactivation of the E1 alpha subunit (PDA1) of the pyruvate dehydrogenase complex. This chain is [Pyruvate dehydrogenase [acetyl-transferring]]-phosphatase 1, mitochondrial (PTC5), found in Saccharomyces cerevisiae (strain ATCC 204508 / S288c) (Baker's yeast).